We begin with the raw amino-acid sequence, 130 residues long: Small ribosomal subunit protein uS9 (130 aa).

The interval 98–130 is disordered; sequence LKRAGLLTRDPRMKERKKPGLKKARRSPQFSKR. A compositionally biased stretch (basic residues) spans 111–130; that stretch reads KERKKPGLKKARRSPQFSKR.

Belongs to the universal ribosomal protein uS9 family.

The sequence is that of Small ribosomal subunit protein uS9 from Staphylococcus epidermidis (strain ATCC 35984 / DSM 28319 / BCRC 17069 / CCUG 31568 / BM 3577 / RP62A).